A 1876-amino-acid chain; its full sequence is 1,3-beta-glucan synthase component FKS1 (1876 aa).

2 stretches are compositionally biased toward polar residues: residues M1–E25 and Q60–T71. A disordered region spans residues M1–G108. At M1–R454 the chain is on the cytoplasmic side. Residue K259 forms a Glycyl lysine isopeptide (Lys-Gly) (interchain with G-Cter in ubiquitin) linkage. T269 and T272 each carry phosphothreonine. Residues K275 and K386 each participate in a glycyl lysine isopeptide (Lys-Gly) (interchain with G-Cter in ubiquitin) cross-link. Residues I455 to Y475 traverse the membrane as a helical segment. Residues T476–K492 are Extracellular-facing. The helical transmembrane segment at W493–C513 threads the bilayer. The Cytoplasmic portion of the chain corresponds to E514 to R531. The chain crosses the membrane as a helical span at residues F532–Y552. The Extracellular segment spans residues D553–H563. Residues V564–P584 traverse the membrane as a helical segment. Topologically, residues L585–S621 are cytoplasmic. The helical transmembrane segment at Y622–L642 threads the bilayer. The Extracellular segment spans residues S643–G678. A helical membrane pass occupies residues L679–V699. The Cytoplasmic segment spans residues N700 to Y1358. Glycyl lysine isopeptide (Lys-Gly) (interchain with G-Cter in ubiquitin) cross-links involve residues K910 and K915. Residues T1359–I1379 form a helical membrane-spanning segment. Over E1380–R1444 the chain is Extracellular. The helical transmembrane segment at F1445–V1465 threads the bilayer. Residues A1466 to Q1469 lie on the Cytoplasmic side of the membrane. A helical transmembrane segment spans residues A1470 to N1490. At P1491–L1560 the chain is on the extracellular side. Residues K1539 and K1547 each participate in a glycyl lysine isopeptide (Lys-Gly) (interchain with G-Cter in ubiquitin) cross-link. The chain crosses the membrane as a helical span at residues I1561 to F1581. Residues I1582–R1601 are Cytoplasmic-facing. Residues I1602 to G1622 form a helical membrane-spanning segment. Residues M1623–A1643 are Extracellular-facing. The chain crosses the membrane as a helical span at residues G1644–L1664. At E1665–M1672 the chain is on the cytoplasmic side. The chain crosses the membrane as a helical span at residues L1673–L1695. The Extracellular portion of the chain corresponds to T1696–S1802. Residues L1803–A1823 form a helical membrane-spanning segment. Over K1824–K1876 the chain is Cytoplasmic.

It belongs to the glycosyltransferase 48 family. Component of the 1,3-beta-glucan synthase (GS) complex, composed of two alternate catalytic subunits FKS1 or GSC2, and a regulatory subunit RHO1. Interacts with RHO1, which is a GTP-binding protein.

The protein localises to the mitochondrion. It is found in the cell membrane. The catalysed reaction is [(1-&gt;3)-beta-D-glucosyl](n) + UDP-alpha-D-glucose = [(1-&gt;3)-beta-D-glucosyl](n+1) + UDP + H(+). Functionally, alternate catalytic subunit of the 1,3-beta-glucan synthase (GS) complex. Synthesizes 1,3-beta-glucan, a major structural component of the yeast cell wall. Involved in cell wall synthesis, maintenance and remodeling. This is 1,3-beta-glucan synthase component FKS1 (FKS1) from Saccharomyces cerevisiae (strain ATCC 204508 / S288c) (Baker's yeast).